The chain runs to 1003 residues: MNGDNASSAADRAGGPAATPVPIPIGWQRCVREGAVYYISPSGTELSSLEQTRSYLLSDGTCKCGLECPLNVPKVFNFDPLAPVTPGGAGVGPASEEDMTKLCNHRRKAVAMATLYRSMETTCSHSSPGEGASPQMFHTVSPGPPSVRPPCRAPPTTPLNGGPGSIPQDPPSVPQAFPPLTGPAGLFPPPRLPDPVPSAGSSSPCFLPRGNAPSPAPPPPPAISLNAPSYNWGASLRSNLVPSDLGSPPAPHASSSPPSDSPLFHCSDALTSPPLPPSNNPPGPPGPPGPATQPPVSSATMHLPLVLGSLGGAPAVEGPGAPPFLASSLLSAAAKAQLPPPSTLQGRRPRAQAPSAAHASPRPSQRRPRRPPTVLRLLEGGGPQTPRRTRPRAPAPVPQPFPLPEPSQPILPSVLSLLGLPTPGPSHSDGSFNLLGSDAHLPPPPALSSGSPPQPRHPIQPSLPGTTSGSLSSVPGAPAPPAASKAPVVPSPVLQSPSDGLGMGAGPACPLPPLAGGEAFPFPSPEQGLALSGAGFPGMLGALPLPLSLGQPPPSPFLSHSLFGVLAGGGQPPPEPLLPPPGGPGPPSAPGEPEGPSLLVASLLSPPPSDLLPPPSAPPSNLLASFLPLLALGPTAGDGEGSAEGAGGPNGEPFSGLGDLPPLLFPPLSAPPTLIALNSALLAASLDPPSGTPPQPCVLSAPQPGPPTSSVTTATTDPGASSLGKAPSNSGRPQLLSPLLSASLLGDLSSLASSPGALPSLLQPPGPLLSSQLGLQLLPGGGAPPALSEASSPLACLLQSLQIPPEQPDAPCLPPESPASALEPEPARPPLSALAPPHASPDPPVPELLTGRGSGKRGRRGGGGLRGINGETRPGRGRKPGSRREPGRLALKWGTRGGFNGQMERSPRRTHHWQHNGELAEGGAEPKDPPLPGTHSEDLKVPPGIVRKSRRGRRRKYNPARNSSSSRQDVTLEPSPTTRAAVPLPPRARPGRPAKNKRRKLAP.

In terms of domain architecture, MBD spans Ala13–Pro83. The tract at residues Asp59–Leu70 is required for interaction with ASXL1/2/3. Disordered stretches follow at residues Cys123–Ala222, Val241–His302, Ala334–Pro619, Ala631–Asp659, Ala684–Leu736, and Ser753–Pro1003. 2 stretches are compositionally biased toward pro residues: residues Pro142–Thr157 and Gln168–Val196. A compositionally biased stretch (low complexity) spans His252–Pro262. A compositionally biased stretch (pro residues) spans Pro273–Gln293. Over residues Ala351–Pro363 the composition is skewed to low complexity. Over residues Ala393 to Pro409 the composition is skewed to pro residues. The span at Ile410–Ser428 shows a compositional bias: low complexity. Positions Leu441–Pro458 are enriched in pro residues. Composition is skewed to low complexity over residues Ser462 to Gly500 and Gly533 to Gly550. Pro residues predominate over residues Gln571–Pro590. The span at Gly591–Leu604 shows a compositional bias: low complexity. Over residues Ser605–Pro618 the composition is skewed to pro residues. Gly residues predominate over residues Ala636 to Asn650. A compositionally biased stretch (polar residues) spans Thr708–Gly719. The span at Leu768–Leu798 shows a compositional bias: low complexity. Pro residues predominate over residues Pro805 to Ser817. A compositionally biased stretch (low complexity) spans Pro818 to Pro837. Over residues Arg947–Asn958 the composition is skewed to basic residues. A compositionally biased stretch (polar residues) spans Ala960 to Asp969. Basic residues predominate over residues Arg989–Pro1003.

In terms of assembly, core component of the polycomb repressive deubiquitinase (PR-DUB) complex, at least composed of BAP1, one of ASXL1, ASXL2 or (probably) ASXL3, and one of MBD5 or MBD6. Distinct combinations of ASXL and MBD proteins may preferentially bind specific histone modification marks. The PR-DUB core associates with a number of accessory proteins, including FOXK1, FOXK2, KDM1B, HCFC1 and OGT; KDM1B specifically associates with ASXL2 PR-DUB complexes. Interacts (via MBD domain) with ASXL1, ASXL2 and ASXL3 (via PHD domain); the interaction is probably direct, mediates association with other PR-DUB complex core components. In terms of tissue distribution, expressed at highest levels in adult testis.

The protein resides in the nucleus. It is found in the chromosome. Its function is as follows. Non-catalytic component of the polycomb repressive deubiquitinase (PR-DUB) complex, a complex that specifically mediates deubiquitination of histone H2A monoubiquitinated at 'Lys-120' (H2AK119ub1). Important for stability of PR-DUB components and stimulating its ubiquitinase activity. As part of the PR-DUB complex, associates with chromatin enriched in histone marks H3K4me1, H3K4me3, and H3K27Ac, but not in H3K27me3. MBD5 and MBD6 containing complexes associate with distinct chromatin regions enriched in genes involved in different pathways. Heterochromatin recruitment is not mediated by DNA methylation. The PR-DUB complex is an epigenetic regulator of gene expression, including genes involved in development, cell communication, signaling, cell proliferation and cell viability; may promote cancer cell growth. The sequence is that of Methyl-CpG-binding domain protein 6 (Mbd6) from Mus musculus (Mouse).